The sequence spans 178 residues: Fucolectin-1 (178 aa).

Residues 1–20 (MKVKTIMLLFQILAISTIKS) form the signal peptide. The tract at residues 29–178 (QENVAVRGKA…VEVNALLPVN (150 aa)) is F5/8 type C-like. Aspartate 59, asparagine 61, and serine 70 together coordinate Ca(2+). Intrachain disulfides connect cysteine 71–cysteine 167, cysteine 103–cysteine 104, and cysteine 129–cysteine 145. Residues histidine 73 and arginine 100 each contribute to the alpha-L-fucose site. Positions 100–102 (RGD) match the Cell attachment site motif. Position 107 (arginine 107) interacts with alpha-L-fucose. Ca(2+) is bound by residues cysteine 167 and glutamate 168.

This sequence belongs to the fucolectin family. As to quaternary structure, homotrimer. Parenchymal hepatocytes.

It localises to the secreted. The protein localises to the extracellular space. Functionally, acts as a defensive agent. Recognizes blood group fucosylated oligosaccharides including A, B, H and Lewis B-type antigens. Does not recognize Lewis A antigen and has low affinity for monovalent haptens. The protein is Fucolectin-1 of Anguilla japonica (Japanese eel).